The chain runs to 613 residues: MASAQSFYNQSSVLKINVMVVDDDHVFLDIMSRMLQHSKYRVIAVDDPKKALSTLKIQRDNIDLIITDYYMPGMNGLQLKKQITQEFGNLPVLVMSSDTNKEEESLSCGAMGFIPKPIHPTDLTKIYQFALSNKRNGKSTLSTEQNHKDADVSVPQQITLVPEQADVLKTKRKNCSFKSDSRTVNSTNGSCVSTDGSRKNRKRKPNGGPSDDGESMSQPAKKKKIQWTDSLHDLFLQAIRHIGLDKAVPKKILAFMSVPYLTRENVASHLQKYRIFLRRVAEQGLYSMLSDRGIDSMFRQTHIKEPYFNYYTPSTSWYDTRLNNRSFYSKPVHGFGQSKLLSTTREPVCFNQMPYNYMNRSSTYEPHRIGSGSNLTLPIQSNLSFPNQPSQNEERRSFFEPPVMANKIAQTSQVLGFGQLGPSAISGHNFNNNMTSRYGSLIPSQPGPSHFSYGMQSFLNNENVTYNPQPPANATTQPNLDELPQLENLNLYNDFGNTSELPYNISNFQFDDNKHQQGEADPTKFELPAAKFSTELNHEDDGDWTFVNINQGQSNGETSNTIASPETNTPILNINHNQNQGQDVPEFNDWSFLDPQELVDDDFMNSLFNNDMN.

One can recognise a Response regulatory domain in the interval 17–131 (NVMVVDDDHV…DLTKIYQFAL (115 aa)). Aspartate 68 carries the post-translational modification 4-aspartylphosphate. Positions 178 to 195 (KSDSRTVNSTNGSCVSTD) are enriched in polar residues. The tract at residues 178-223 (KSDSRTVNSTNGSCVSTDGSRKNRKRKPNGGPSDDGESMSQPAKKK) is disordered. The Nuclear localization signal signature appears at 221–224 (KKKK). A DNA-binding region (myb-like GARP) is located at residues 224–274 (KIQWTDSLHDLFLQAIRHIGLDKAVPKKILAFMSVPYLTRENVASHLQKYR).

Belongs to the ARR family. Type-B subfamily. Binds the target DNA as a monomer. Two-component system major event consists of a His-to-Asp phosphorelay between a sensor histidine kinase (HK) and a response regulator (RR). In plants, the His-to-Asp phosphorelay involves an additional intermediate named Histidine-containing phosphotransfer protein (HPt). This multistep phosphorelay consists of a His-Asp-His-Asp sequential transfer of a phosphate group between first a His and an Asp of the HK protein, followed by the transfer to a conserved His of the HPt protein and finally the transfer to an Asp in the receiver domain of the RR protein. As to expression, mainly expressed in siliques. Also found in germinating seedlings, stems, flowers and roots, but not in rosette leaves.

The protein resides in the nucleus. Its function is as follows. Putative transcriptional activator that binds specifically to the DNA sequence 5'-[AG]GATT-3'. Functions as a response regulator involved in His-to-Asp phosphorelay signal transduction system. Phosphorylation of the Asp residue in the receiver domain activates the ability of the protein to promote the transcription of target genes. Could directly activate some type-A response regulators in response to cytokinins. This is Putative two-component response regulator ARR21 (ARR21) from Arabidopsis thaliana (Mouse-ear cress).